Consider the following 387-residue polypeptide: Exodeoxyribonuclease 7 large subunit (387 aa).

This sequence belongs to the XseA family. As to quaternary structure, heterooligomer composed of large and small subunits.

Its subcellular location is the cytoplasm. The enzyme catalyses Exonucleolytic cleavage in either 5'- to 3'- or 3'- to 5'-direction to yield nucleoside 5'-phosphates.. Bidirectionally degrades single-stranded DNA into large acid-insoluble oligonucleotides, which are then degraded further into small acid-soluble oligonucleotides. This chain is Exodeoxyribonuclease 7 large subunit, found in Campylobacter hominis (strain ATCC BAA-381 / DSM 21671 / CCUG 45161 / LMG 19568 / NCTC 13146 / CH001A).